Here is a 509-residue protein sequence, read N- to C-terminus: Protein WHAT'S THIS FACTOR 1 homolog, chloroplastic (509 aa).

The N-terminal 56 residues, 1-56, are a transit peptide targeting the chloroplast; sequence MDAKLLLLPFPSPPATLHHHPPPPKSLFLGASLPLLHPPPPLRLLRPGAPRRLAVV. The PORR domain occupies 65 to 393; that stretch reads KEIPFDNVIQ…LKEKMRALVA (329 aa). Disordered regions lie at residues 402–431 and 444–509; these read VPAT…DEDE and SGGK…RERW. The span at 461-474 shows a compositional bias: acidic residues; it reads ENDDSPPDFEDDDG.

The protein resides in the plastid. It localises to the chloroplast. In terms of biological role, RNA-binding protein involved in group II intron splicing. Binds specific group II introns and promotes their splicing. Functions in the context of a heterodimer with the ribonuclease III domain-containing protein RNC1. This chain is Protein WHAT'S THIS FACTOR 1 homolog, chloroplastic, found in Oryza sativa subsp. japonica (Rice).